Reading from the N-terminus, the 301-residue chain is Cilia- and flagella-associated protein 161 (301 aa).

Residues Gly-269 to Gln-301 form a disordered region.

In terms of assembly, microtubule inner protein component of sperm flagellar doublet microtubules. Expressed in airway epithelial cells.

It is found in the cytoplasm. The protein resides in the cytoskeleton. Its subcellular location is the cilium axoneme. The protein localises to the flagellum axoneme. In terms of biological role, microtubule inner protein (MIP) part of the dynein-decorated doublet microtubules (DMTs) in cilia axoneme, which is required for motile cilia beating. This chain is Cilia- and flagella-associated protein 161, found in Homo sapiens (Human).